Reading from the N-terminus, the 159-residue chain is 2-C-methyl-D-erythritol 2,4-cyclodiphosphate synthase (159 aa).

Positions 9 and 11 each coordinate a divalent metal cation. Residues 9 to 11 and 35 to 36 contribute to the 4-CDP-2-C-methyl-D-erythritol 2-phosphate site; these read DVH and HS. Position 43 (His-43) interacts with a divalent metal cation. 4-CDP-2-C-methyl-D-erythritol 2-phosphate is bound by residues 57–59, 62–66, 133–136, Phe-140, and Arg-143; these read DIG, FPDTD, and TTTE.

Belongs to the IspF family. Homotrimer. The cofactor is a divalent metal cation.

The enzyme catalyses 4-CDP-2-C-methyl-D-erythritol 2-phosphate = 2-C-methyl-D-erythritol 2,4-cyclic diphosphate + CMP. The protein operates within isoprenoid biosynthesis; isopentenyl diphosphate biosynthesis via DXP pathway; isopentenyl diphosphate from 1-deoxy-D-xylulose 5-phosphate: step 4/6. In terms of biological role, involved in the biosynthesis of isopentenyl diphosphate (IPP) and dimethylallyl diphosphate (DMAPP), two major building blocks of isoprenoid compounds. Catalyzes the conversion of 4-diphosphocytidyl-2-C-methyl-D-erythritol 2-phosphate (CDP-ME2P) to 2-C-methyl-D-erythritol 2,4-cyclodiphosphate (ME-CPP) with a corresponding release of cytidine 5-monophosphate (CMP). The polypeptide is 2-C-methyl-D-erythritol 2,4-cyclodiphosphate synthase (Mannheimia succiniciproducens (strain KCTC 0769BP / MBEL55E)).